Consider the following 236-residue polypeptide: CHD1 helical C-terminal domain containing protein 1 (236 aa).

The tract at residues 1–29 (MEASDWQGGEGDKPLEKVGSVPCLERSSS) is disordered. The tract at residues 44–145 (LSQDTFKICK…TNQTAKFLAA (102 aa)) is CHD1 helical C-terminal domain (CHCT). Residues 197–236 (LEEPRSSHCSRGDSLRKLPQKPKLKKKRIKERLESPKSCS) are disordered. A compositionally biased stretch (basic and acidic residues) spans 198 to 212 (EEPRSSHCSRGDSLR). Residues 214-226 (LPQKPKLKKKRIK) are compositionally biased toward basic residues. The segment covering 227-236 (ERLESPKSCS) has biased composition (basic and acidic residues).

As to expression, exclusively expressed in testes.

The protein resides in the cytoplasm. It localises to the nucleus. Functionally, may play a role in regulation of apoptosis. The protein is CHD1 helical C-terminal domain containing protein 1 (Chct1) of Mus musculus (Mouse).